A 257-amino-acid polypeptide reads, in one-letter code: Geranylgeranylglyceryl phosphate synthase (257 aa).

Positions 27 and 57 each coordinate Mg(2+). Sn-glycerol 1-phosphate is bound by residues tyrosine 175–glycine 181, glycine 207–glycine 208, and glycine 229–asparagine 230.

The protein belongs to the GGGP/HepGP synthase family. Group II subfamily. The cofactor is Mg(2+).

Its subcellular location is the cytoplasm. It catalyses the reaction sn-glycerol 1-phosphate + (2E,6E,10E)-geranylgeranyl diphosphate = sn-3-O-(geranylgeranyl)glycerol 1-phosphate + diphosphate. The protein operates within membrane lipid metabolism; glycerophospholipid metabolism. Functionally, prenyltransferase that catalyzes the transfer of the geranylgeranyl moiety of geranylgeranyl diphosphate (GGPP) to the C3 hydroxyl of sn-glycerol-1-phosphate (G1P). This reaction is the first ether-bond-formation step in the biosynthesis of archaeal membrane lipids. The chain is Geranylgeranylglyceryl phosphate synthase from Sulfolobus acidocaldarius (strain ATCC 33909 / DSM 639 / JCM 8929 / NBRC 15157 / NCIMB 11770).